The sequence spans 313 residues: FAM172 family protein homolog Y75B8A.31 (313 aa).

The disordered stretch occupies residues 293–313; the sequence is VKSENSKESDDEAPKSKKICV. The span at 296–307 shows a compositional bias: basic and acidic residues; sequence ENSKESDDEAPK.

This sequence belongs to the FAM172 family.

The sequence is that of FAM172 family protein homolog Y75B8A.31 from Caenorhabditis elegans.